We begin with the raw amino-acid sequence, 488 residues long: Glutamyl-tRNA(Gln) amidotransferase subunit A (488 aa).

Residues lysine 77 and serine 152 each act as charge relay system in the active site. Serine 176 (acyl-ester intermediate) is an active-site residue.

The protein belongs to the amidase family. GatA subfamily. In terms of assembly, heterotrimer of A, B and C subunits.

The catalysed reaction is L-glutamyl-tRNA(Gln) + L-glutamine + ATP + H2O = L-glutaminyl-tRNA(Gln) + L-glutamate + ADP + phosphate + H(+). Its function is as follows. Allows the formation of correctly charged Gln-tRNA(Gln) through the transamidation of misacylated Glu-tRNA(Gln) in organisms which lack glutaminyl-tRNA synthetase. The reaction takes place in the presence of glutamine and ATP through an activated gamma-phospho-Glu-tRNA(Gln). This Streptococcus pneumoniae (strain Hungary19A-6) protein is Glutamyl-tRNA(Gln) amidotransferase subunit A.